We begin with the raw amino-acid sequence, 99 residues long: Large ribosomal subunit protein uL23 (99 aa).

It belongs to the universal ribosomal protein uL23 family. In terms of assembly, part of the 50S ribosomal subunit. Contacts protein L29, and trigger factor when it is bound to the ribosome.

Its function is as follows. One of the early assembly proteins it binds 23S rRNA. One of the proteins that surrounds the polypeptide exit tunnel on the outside of the ribosome. Forms the main docking site for trigger factor binding to the ribosome. The chain is Large ribosomal subunit protein uL23 from Stutzerimonas stutzeri (strain A1501) (Pseudomonas stutzeri).